Consider the following 238-residue polypeptide: Endothelial protein C receptor (238 aa).

Positions 1-17 (MLTTLLPILLLSGWAFC) are cleaved as a signal peptide. Residues 18–210 (SQDASDGLQR…GSQTSRSYTS (193 aa)) are Extracellular-facing. N-linked (GlcNAc...) asparagine glycosylation is found at N47, N64, N136, and N172. C118 and C186 are joined by a disulfide. The helical transmembrane segment at 211-231 (LVLGVLVGSFIIAGVAVGIFL) threads the bilayer. The Cytoplasmic segment spans residues 232-238 (CTGGRRC).

N-glycosylated. In terms of processing, a soluble form exists; probably released by a metalloprotease. Seems to have the same activity as the membrane-bound form. As to expression, expressed strongly in the endothelial cells of arteries and veins in heart and lung, less intensely in capillaries in the lung and skin, and not at all in the endothelium of small vessels of the liver and kidney.

It is found in the membrane. In terms of biological role, binds activated protein C. Enhances protein C activation by the thrombin-thrombomodulin complex; plays a role in the protein C pathway controlling blood coagulation. This Homo sapiens (Human) protein is Endothelial protein C receptor (PROCR).